Reading from the N-terminus, the 315-residue chain is MPDIKLFAGNATPSLAKKIADRLFCKLGDAVVGRFSDGEISVQINENVRGADVFIIQSTCAPTNDNLMELIVMVDALRRASAGRITAVIPYFGYARQDRRVRSARVPITAKVVADFLSSVGVDRVLTCDLHAEQIQGFFDVPVDNVFGSPVLLEDMLAKKLDNPVVVSPDIGGVVRARAVAKLLDDSDLAIIDKRRPQANVAQVMHIIGDVQGRDCIIVDDMIDTGGTLCKAAEALKEHGANRVFAYATHPVFSGKAAENITNSVIDEVIVTDTVPLSPEMLKVAKVTQLTMSAVLAEAIRRVSNEESISAMFSH.

ATP is bound by residues 37–39 (DGE) and 96–97 (RQ). Residues H131 and D170 each contribute to the Mg(2+) site. K194 is an active-site residue. Residues R196, D220, and 224 to 228 (DTGGT) each bind D-ribose 5-phosphate.

This sequence belongs to the ribose-phosphate pyrophosphokinase family. Class I subfamily. As to quaternary structure, homohexamer. It depends on Mg(2+) as a cofactor.

The protein localises to the cytoplasm. The catalysed reaction is D-ribose 5-phosphate + ATP = 5-phospho-alpha-D-ribose 1-diphosphate + AMP + H(+). It participates in metabolic intermediate biosynthesis; 5-phospho-alpha-D-ribose 1-diphosphate biosynthesis; 5-phospho-alpha-D-ribose 1-diphosphate from D-ribose 5-phosphate (route I): step 1/1. In terms of biological role, involved in the biosynthesis of the central metabolite phospho-alpha-D-ribosyl-1-pyrophosphate (PRPP) via the transfer of pyrophosphoryl group from ATP to 1-hydroxyl of ribose-5-phosphate (Rib-5-P). The polypeptide is Ribose-phosphate pyrophosphokinase (Shewanella oneidensis (strain ATCC 700550 / JCM 31522 / CIP 106686 / LMG 19005 / NCIMB 14063 / MR-1)).